Here is a 143-residue protein sequence, read N- to C-terminus: Pathogenesis-related protein P2 (143 aa).

Residues 1–23 (MERVNKLCVAFFVINMMMAVAAA) form the signal peptide. Residues 24–143 (QSATNVRATY…LNVNYEFVNC (120 aa)) form the Barwin domain. 3 cysteine pairs are disulfide-bonded: C52/C84, C73/C107, and C87/C143.

It localises to the secreted. It is found in the cell wall. This Solanum lycopersicum (Tomato) protein is Pathogenesis-related protein P2.